The sequence spans 504 residues: Porphyrin biosynthesis protein HemD (504 aa).

Residues 1–248 (MEHGFVALVG…LSEKFSWFMK (248 aa)) are uroporphyrinogen-III C-methyltransferase. The tract at residues 249 to 504 (KPLFGTKILV…LEIGGGNIYD (256 aa)) is uroporphyrinogen-III synthase.

The protein in the N-terminal section; belongs to the precorrin methyltransferase family. It in the C-terminal section; belongs to the uroporphyrinogen-III synthase family.

It carries out the reaction uroporphyrinogen III + 2 S-adenosyl-L-methionine = precorrin-2 + 2 S-adenosyl-L-homocysteine + H(+). The enzyme catalyses hydroxymethylbilane = uroporphyrinogen III + H2O. Its pathway is cofactor biosynthesis; adenosylcobalamin biosynthesis; precorrin-2 from uroporphyrinogen III: step 1/1. The protein operates within porphyrin-containing compound metabolism; siroheme biosynthesis; precorrin-2 from uroporphyrinogen III: step 1/1. In terms of biological role, may catalyze sequential reactions to synthesize uroporphyrinogen III from hydroxymethylbilane (HMB) and then precorrin-2, which are intermediate compounds in both vitamin B12 and siroheme biosyntheses. The polypeptide is Porphyrin biosynthesis protein HemD (hemD) (Ruminiclostridium josui (Clostridium josui)).